A 139-amino-acid polypeptide reads, in one-letter code: Transcription antitermination protein NusB (139 aa).

This sequence belongs to the NusB family.

Its function is as follows. Involved in transcription antitermination. Required for transcription of ribosomal RNA (rRNA) genes. Binds specifically to the boxA antiterminator sequence of the ribosomal RNA (rrn) operons. The chain is Transcription antitermination protein NusB from Escherichia coli (strain K12 / MC4100 / BW2952).